Reading from the N-terminus, the 131-residue chain is Small ribosomal subunit protein eS6 (131 aa).

Residues A76–G95 are disordered. Over residues K81 to V93 the composition is skewed to basic residues.

Belongs to the eukaryotic ribosomal protein eS6 family.

In Methanocaldococcus jannaschii (strain ATCC 43067 / DSM 2661 / JAL-1 / JCM 10045 / NBRC 100440) (Methanococcus jannaschii), this protein is Small ribosomal subunit protein eS6.